A 125-amino-acid polypeptide reads, in one-letter code: Insulin growth factor-like family member 3 (125 aa).

The N-terminal stretch at 1–24 is a signal peptide; it reads MRPRCCILALVCWITVFLLQCSKG.

This sequence belongs to the IGFL family. In terms of tissue distribution, detected in the cerebellum.

The protein localises to the secreted. Its function is as follows. Potential ligand of the IGFLR1 cell membrane receptor. This chain is Insulin growth factor-like family member 3 (IGFL3), found in Homo sapiens (Human).